The primary structure comprises 536 residues: CTP synthase (536 aa).

Positions 1–267 (MSKFVFVTGG…CKETLRCLDL (267 aa)) are amidoligase domain. S13 contributes to the CTP binding site. Residue S13 participates in UTP binding. Residues 14–19 (SIGKGI) and D71 each bind ATP. Mg(2+)-binding residues include D71 and E141. Residues 148 to 150 (DIE), 188 to 193 (KTKPTQ), and K224 each bind CTP. UTP is bound by residues 188–193 (KTKPTQ) and K224. In terms of domain architecture, Glutamine amidotransferase type-1 spans 292–534 (KVALVGKYIE…IKASREKLEQ (243 aa)). Residue G354 coordinates L-glutamine. C381 functions as the Nucleophile; for glutamine hydrolysis in the catalytic mechanism. L-glutamine is bound by residues 382 to 385 (LGMQ), E405, and R462. Residues H507 and E509 contribute to the active site.

This sequence belongs to the CTP synthase family. In terms of assembly, homotetramer.

The catalysed reaction is UTP + L-glutamine + ATP + H2O = CTP + L-glutamate + ADP + phosphate + 2 H(+). It catalyses the reaction L-glutamine + H2O = L-glutamate + NH4(+). The enzyme catalyses UTP + NH4(+) + ATP = CTP + ADP + phosphate + 2 H(+). The protein operates within pyrimidine metabolism; CTP biosynthesis via de novo pathway; CTP from UDP: step 2/2. Its activity is regulated as follows. Allosterically activated by GTP, when glutamine is the substrate; GTP has no effect on the reaction when ammonia is the substrate. The allosteric effector GTP functions by stabilizing the protein conformation that binds the tetrahedral intermediate(s) formed during glutamine hydrolysis. Inhibited by the product CTP, via allosteric rather than competitive inhibition. Its function is as follows. Catalyzes the ATP-dependent amination of UTP to CTP with either L-glutamine or ammonia as the source of nitrogen. Regulates intracellular CTP levels through interactions with the four ribonucleotide triphosphates. This chain is CTP synthase, found in Prochlorococcus marinus (strain MIT 9515).